A 335-amino-acid polypeptide reads, in one-letter code: N-acetyl-gamma-glutamyl-phosphate reductase (335 aa).

Cys-155 is a catalytic residue.

This sequence belongs to the NAGSA dehydrogenase family. Type 1 subfamily.

Its subcellular location is the cytoplasm. It carries out the reaction N-acetyl-L-glutamate 5-semialdehyde + phosphate + NADP(+) = N-acetyl-L-glutamyl 5-phosphate + NADPH + H(+). Its pathway is amino-acid biosynthesis; L-arginine biosynthesis; N(2)-acetyl-L-ornithine from L-glutamate: step 3/4. In terms of biological role, catalyzes the NADPH-dependent reduction of N-acetyl-5-glutamyl phosphate to yield N-acetyl-L-glutamate 5-semialdehyde. The sequence is that of N-acetyl-gamma-glutamyl-phosphate reductase from Pasteurella multocida (strain Pm70).